A 218-amino-acid chain; its full sequence is Elongation factor Ts (218 aa).

Residues 82–85 (TDFV) are involved in Mg(2+) ion dislocation from EF-Tu.

The protein belongs to the EF-Ts family.

The protein resides in the cytoplasm. Functionally, associates with the EF-Tu.GDP complex and induces the exchange of GDP to GTP. It remains bound to the aminoacyl-tRNA.EF-Tu.GTP complex up to the GTP hydrolysis stage on the ribosome. This Prochlorococcus marinus (strain MIT 9211) protein is Elongation factor Ts.